The sequence spans 1805 residues: Kinesin-like protein KIF13A (1805 aa).

The 348-residue stretch at Lys5–Ile352 folds into the Kinesin motor domain. Gly102–Ser109 serves as a coordination point for ATP. A coiled-coil region spans residues Asn359–Glu436. Residues His469–Val519 form the FHA domain. The segment covering Glu556–Asp567 has biased composition (basic and acidic residues). 2 disordered regions span residues Glu556–Glu575 and Gln633–Ala656. 2 coiled-coil regions span residues Val602–Lys775 and Asp1100–Val1138. Position 636 is a phosphoserine (Ser636). Ser1287 is subject to Phosphoserine. Over residues Thr1385–Pro1396 the composition is skewed to polar residues. Residues Thr1385–Asp1404 form a disordered region. A phosphoserine mark is found at Ser1454, Ile1481, Ser1490, and Met1494. The disordered stretch occupies residues Pro1507–Glu1531. The stretch at Glu1518–Gln1547 forms a coiled coil. Residues His1519–Asp1528 are compositionally biased toward basic and acidic residues. Phosphoserine occurs at positions 1529 and 1572. Positions Met1612–Asp1621 are enriched in low complexity. The tract at residues Met1612–Arg1645 is disordered. Ser1648 and Ser1698 each carry phosphoserine. Positions Gly1749–His1779 are disordered. The span at Thr1751 to Lys1771 shows a compositional bias: polar residues.

Belongs to the TRAFAC class myosin-kinesin ATPase superfamily. Kinesin family. Interacts with AP2B1. Interacts with ZFYVE26. Interacts with AP1G1 and AP1G2. Widely expressed, with highest levels in heart, brain and skeletal muscle.

The protein resides in the cytoplasm. It is found in the cytoskeleton. Its subcellular location is the microtubule organizing center. It localises to the centrosome. The protein localises to the midbody. The protein resides in the endosome membrane. It is found in the golgi apparatus membrane. In terms of biological role, plus end-directed microtubule-dependent motor protein involved in intracellular transport and regulating various processes such as mannose-6-phosphate receptor (M6PR) transport to the plasma membrane, endosomal sorting during melanosome biogenesis and cytokinesis. Mediates the transport of M6PR-containing vesicles from trans-Golgi network to the plasma membrane via direct interaction with the AP-1 complex. During melanosome maturation, required for delivering melanogenic enzymes from recycling endosomes to nascent melanosomes by creating peripheral recycling endosomal subdomains in melanocytes. Also required for the abscission step in cytokinesis: mediates translocation of ZFYVE26, and possibly TTC19, to the midbody during cytokinesis. The sequence is that of Kinesin-like protein KIF13A (KIF13A) from Homo sapiens (Human).